Reading from the N-terminus, the 70-residue chain is Small ribosomal subunit protein bS21 (70 aa).

Positions 43-70 are disordered; it reads TERKRKAAAAVKRQHKRLRSLTLPPKLY. A compositionally biased stretch (basic residues) spans 45-61; it reads RKRKAAAAVKRQHKRLR.

It belongs to the bacterial ribosomal protein bS21 family.

In Dechloromonas aromatica (strain RCB), this protein is Small ribosomal subunit protein bS21.